We begin with the raw amino-acid sequence, 121 residues long: UPF0738 protein RBAM_011600 (121 aa).

Belongs to the UPF0738 family.

The sequence is that of UPF0738 protein RBAM_011600 from Bacillus velezensis (strain DSM 23117 / BGSC 10A6 / LMG 26770 / FZB42) (Bacillus amyloliquefaciens subsp. plantarum).